The primary structure comprises 159 residues: Ribosomal RNA large subunit methyltransferase H (159 aa).

S-adenosyl-L-methionine-binding positions include leucine 76, glycine 107, and 126–131 (ISSLTL).

It belongs to the RNA methyltransferase RlmH family. In terms of assembly, homodimer.

It is found in the cytoplasm. It catalyses the reaction pseudouridine(1915) in 23S rRNA + S-adenosyl-L-methionine = N(3)-methylpseudouridine(1915) in 23S rRNA + S-adenosyl-L-homocysteine + H(+). Functionally, specifically methylates the pseudouridine at position 1915 (m3Psi1915) in 23S rRNA. This is Ribosomal RNA large subunit methyltransferase H from Cupriavidus metallidurans (strain ATCC 43123 / DSM 2839 / NBRC 102507 / CH34) (Ralstonia metallidurans).